The chain runs to 704 residues: Glycine--tRNA ligase beta subunit (704 aa).

This sequence belongs to the class-II aminoacyl-tRNA synthetase family. As to quaternary structure, tetramer of two alpha and two beta subunits.

It localises to the cytoplasm. It catalyses the reaction tRNA(Gly) + glycine + ATP = glycyl-tRNA(Gly) + AMP + diphosphate. In Rhizobium johnstonii (strain DSM 114642 / LMG 32736 / 3841) (Rhizobium leguminosarum bv. viciae), this protein is Glycine--tRNA ligase beta subunit.